The sequence spans 671 residues: UvrABC system protein B (671 aa).

A Helicase ATP-binding domain is found at 26 to 414 (EGLENGLAHQ…GGDIIEQVVR (389 aa)). Residue 39–46 (GVTGSGKT) coordinates ATP. A Beta-hairpin motif is present at residues 92–115 (YYDYYQPEAYVPSSDTFIEKDASV). The Helicase C-terminal domain occupies 431–593 (QVDDLLSEIR…IIPQGLNKKI (163 aa)). The UVR domain maps to 631–666 (DQKIRELEAKMYTYAQNLEFEQAAELRDQVHQLRQQ).

It belongs to the UvrB family. As to quaternary structure, forms a heterotetramer with UvrA during the search for lesions. Interacts with UvrC in an incision complex.

The protein localises to the cytoplasm. Functionally, the UvrABC repair system catalyzes the recognition and processing of DNA lesions. A damage recognition complex composed of 2 UvrA and 2 UvrB subunits scans DNA for abnormalities. Upon binding of the UvrA(2)B(2) complex to a putative damaged site, the DNA wraps around one UvrB monomer. DNA wrap is dependent on ATP binding by UvrB and probably causes local melting of the DNA helix, facilitating insertion of UvrB beta-hairpin between the DNA strands. Then UvrB probes one DNA strand for the presence of a lesion. If a lesion is found the UvrA subunits dissociate and the UvrB-DNA preincision complex is formed. This complex is subsequently bound by UvrC and the second UvrB is released. If no lesion is found, the DNA wraps around the other UvrB subunit that will check the other stand for damage. The chain is UvrABC system protein B from Yersinia pestis.